The primary structure comprises 61 residues: Large ribosomal subunit protein bL28 (61 aa).

A disordered region spans residues Met1–Arg26.

This sequence belongs to the bacterial ribosomal protein bL28 family.

The polypeptide is Large ribosomal subunit protein bL28 (Ligilactobacillus salivarius (strain UCC118) (Lactobacillus salivarius)).